We begin with the raw amino-acid sequence, 135 residues long: MEGKIMNIKHKIPILLLVLYIALGVFIQYNGISEFKSLPSPIYGGDYYYQMGVIWHIRDGGNPLESSSMIGGMPGYLPLYAYLCAKFCDLLNLDTMKGILYFSVVLFIMTSVIWFYLFRVLFKDDWVALIEVVLA.

3 helical membrane-spanning segments follow: residues 12-32 (IPIL…YNGI), 68-88 (SMIG…AKFC), and 98-118 (GILY…FYLF).

The protein localises to the cell membrane. This is an uncharacterized protein from Methanocaldococcus jannaschii (strain ATCC 43067 / DSM 2661 / JAL-1 / JCM 10045 / NBRC 100440) (Methanococcus jannaschii).